The sequence spans 738 residues: Dipeptidyl peptidase 3 (738 aa).

Alanine 2 carries the post-translational modification N-acetylalanine. Residue histidine 450 coordinates Zn(2+). The active site involves glutamate 451. The Zn(2+) site is built by histidine 455 and glutamate 508.

The protein belongs to the peptidase M49 family. The cofactor is Zn(2+).

It localises to the cytoplasm. It catalyses the reaction Release of an N-terminal dipeptide from a peptide comprising four or more residues, with broad specificity. Also acts on dipeptidyl 2-naphthylamides.. Inhibited by spinorphin, an opioid peptide derived from hemoglobin. Functionally, cleaves and degrades bioactive peptides, including angiotensin, Leu-enkephalin and Met-enkephalin. Also cleaves Arg-Arg-beta-naphthylamide. This is Dipeptidyl peptidase 3 (Dpp3) from Rattus norvegicus (Rat).